The following is a 460-amino-acid chain: Dynactin subunit 4 (460 aa).

Alanine 2 is modified (N-acetylalanine). The stretch at 152–172 forms a coiled coil; it reads QQLAQKEKVERDRKKLARRRN. At serine 196 the chain carries Phosphoserine. Residue lysine 215 forms a Glycyl lysine isopeptide (Lys-Gly) (interchain with G-Cter in SUMO2) linkage. Threonine 407 carries the phosphothreonine modification.

It belongs to the dynactin subunit 4 family. Subunit of dynactin, a multiprotein complex part of a tripartite complex with dynein and a adapter, such as BICDL1, BICD2 or HOOK3. The dynactin complex is built around ACTR1A/ACTB filament and consists of an actin-related filament composed of a shoulder domain, a pointed end and a barbed end. Its length is defined by its flexible shoulder domain. The soulder is composed of 2 DCTN1 subunits, 4 DCTN2 and 2 DCTN3. The 4 DCNT2 (via N-terminus) bind the ACTR1A filament and act as molecular rulers to determine the length. The pointed end is important for binding dynein-dynactin cargo adapters. Consists of 4 subunits: ACTR10, DCNT4, DCTN5 and DCTN6. The barbed end is composed of a CAPZA1:CAPZB heterodimers, which binds ACTR1A/ACTB filament and dynactin and stabilizes dynactin. Interacts with ATP7B, but not ATP7A, in a copper-dependent manner. Interacts with ANK2; this interaction is required for localization at costameres. Interacts with N4BP2L1.

The protein localises to the cytoplasm. The protein resides in the cytoskeleton. It localises to the microtubule organizing center. Its subcellular location is the centrosome. It is found in the stress fiber. The protein localises to the cell cortex. The protein resides in the myofibril. It localises to the sarcomere. Its function is as follows. Part of the dynactin complex that activates the molecular motor dynein for ultra-processive transport along microtubules. This chain is Dynactin subunit 4, found in Homo sapiens (Human).